A 329-amino-acid polypeptide reads, in one-letter code: Neuropeptides B/W receptor type 1 (329 aa).

At 1–39 (MHNLSLFEPGRGNVSCGGPFLGCPNESNPAPLPLPQPLA) the chain is on the extracellular side. 3 N-linked (GlcNAc...) asparagine glycosylation sites follow: N3, N13, and N25. The helical transmembrane segment at 40–63 (VAVPVVYGVICAVGLAGNSAVLYV) threads the bilayer. Residues 64 to 74 (LLRTPRMKTVT) are Cytoplasmic-facing. A helical membrane pass occupies residues 75–99 (NVFILNLAIADELFTLVLPINIADF). The Extracellular segment spans residues 100–114 (LLRRWPFGEVMCKLI). C111 and C190 are disulfide-bonded. Residues 115-134 (VAVDQYNTFSSLYFLAVMSA) form a helical membrane-spanning segment. At 135-159 (DRYLVVLATAESRRVSGRTYGAARA) the chain is on the cytoplasmic side. The helical transmembrane segment at 160–179 (VSLAVWALVTLVVLPFAVFA) threads the bilayer. The Extracellular segment spans residues 180–204 (RLDEEQGRRQCVLVFPQPEAFWWRA). The helical transmembrane segment at 205 to 226 (SRLYTLVLGFAIPVSTICALYI) threads the bilayer. At 227–250 (TLLCRLRAIQLDSHAKALDRAKKR) the chain is on the cytoplasmic side. A helical membrane pass occupies residues 251–275 (VTLLVVAILAVCLLCWTPYHLSTIV). Over 276–285 (ALTTDLPQTP) the chain is Extracellular. The chain crosses the membrane as a helical span at residues 286–300 (LVIGISYFITSLSYA). Over 301–329 (NSCLNPFLYAFLDDSFRRSLRQLVSCRTA) the chain is Cytoplasmic.

It belongs to the G-protein coupled receptor 1 family.

The protein resides in the cell membrane. Functionally, interacts specifically with a number of opioid ligands. Receptor for neuropeptides B and W, which may be involved in neuroendocrine system regulation, food intake and the organization of other signals. The sequence is that of Neuropeptides B/W receptor type 1 (Npbwr1) from Rattus norvegicus (Rat).